The primary structure comprises 259 residues: Small ribosomal subunit protein uS2 (259 aa).

Belongs to the universal ribosomal protein uS2 family.

In Fervidobacterium nodosum (strain ATCC 35602 / DSM 5306 / Rt17-B1), this protein is Small ribosomal subunit protein uS2.